Reading from the N-terminus, the 209-residue chain is MRAAAISMPRLNKMPGMFFSASPKDSKEHSHSLLDDKKQKKRPKTFGMDVKTYLRSMIPHLESGMKSAKSKDILSAEEVMQWSQSLEKLLANQTGQNVFGRFLKSEFSEENIEFWLACEDYKKTETDLLHNKAENIYKAFVHSDAVKQINIDFHTRESTAKKIKTPTPTSFDEAQKVIYSLMEKDSYPRFLKSNIYLNLLNDLQANTLK.

A disordered region spans residues 19 to 42; the sequence is FSASPKDSKEHSHSLLDDKKQKKR. The span at 24-38 shows a compositional bias: basic and acidic residues; sequence KDSKEHSHSLLDDKK. An RGS domain is found at 85 to 200; sequence SLEKLLANQT…LKSNIYLNLL (116 aa).

Interacts with GNAI1 and GNAQ. As to expression, detected in spleen, lymph node and intestine.

The protein localises to the cell membrane. It localises to the cytoplasm. The protein resides in the cytosol. Functionally, regulates G protein-coupled receptor signaling cascades, including signaling downstream of the N-formylpeptide chemoattractant receptors and leukotriene receptors. Inhibits B cell chemotaxis toward CXCL12. Inhibits signal transduction by increasing the GTPase activity of G protein alpha subunits thereby driving them into their inactive GDP-bound form. This is Regulator of G-protein signaling 1 (Rgs1) from Mus musculus (Mouse).